A 232-amino-acid polypeptide reads, in one-letter code: 2,3,4,5-tetrahydropyridine-2,6-dicarboxylate N-acetyltransferase (232 aa).

The protein belongs to the transferase hexapeptide repeat family. DapH subfamily.

The enzyme catalyses (S)-2,3,4,5-tetrahydrodipicolinate + acetyl-CoA + H2O = L-2-acetamido-6-oxoheptanedioate + CoA. It participates in amino-acid biosynthesis; L-lysine biosynthesis via DAP pathway; LL-2,6-diaminopimelate from (S)-tetrahydrodipicolinate (acetylase route): step 1/3. Its function is as follows. Catalyzes the transfer of an acetyl group from acetyl-CoA to tetrahydrodipicolinate. This is 2,3,4,5-tetrahydropyridine-2,6-dicarboxylate N-acetyltransferase from Streptococcus uberis (strain ATCC BAA-854 / 0140J).